The chain runs to 341 residues: Phenylalanine--tRNA ligase alpha subunit (341 aa).

Residue glutamate 254 coordinates Mg(2+).

Belongs to the class-II aminoacyl-tRNA synthetase family. Phe-tRNA synthetase alpha subunit type 1 subfamily. In terms of assembly, tetramer of two alpha and two beta subunits. Mg(2+) serves as cofactor.

The protein localises to the cytoplasm. It catalyses the reaction tRNA(Phe) + L-phenylalanine + ATP = L-phenylalanyl-tRNA(Phe) + AMP + diphosphate + H(+). The chain is Phenylalanine--tRNA ligase alpha subunit from Chlorobium phaeobacteroides (strain DSM 266 / SMG 266 / 2430).